Consider the following 131-residue polypeptide: MRHYEIIFMVHPDQSEQVAGMIERYSALITGAEGQIHRLEDWGRRQLAYPINKLHKAHYVLLNVEAPQEVIDELETVFRFNDAVIRSMIMRVKHAVTEASPMVKAKDERRERREDFATETNEDSDAGDSEE.

A disordered region spans residues Ala-99–Glu-131. The segment covering Lys-104–Phe-116 has biased composition (basic and acidic residues). A compositionally biased stretch (acidic residues) spans Thr-120–Glu-131.

Belongs to the bacterial ribosomal protein bS6 family.

Functionally, binds together with bS18 to 16S ribosomal RNA. The protein is Small ribosomal subunit protein bS6 of Sodalis glossinidius (strain morsitans).